Consider the following 327-residue polypeptide: F-box/LRR-repeat protein At3g58900 (327 aa).

The region spanning 1-47 (MDLFSSLPNELLYHILSFLSTKEAALTSVLSKRWRNLFAFVPYLEFD) is the F-box domain. 5 LRR repeats span residues 116–144 (DLFI…RVGS), 161–192 (KTLV…DMTN), 199–230 (NVTV…SFDA), 235–261 (YFYY…QINL), and 277–308 (EMLV…YLSP).

The polypeptide is F-box/LRR-repeat protein At3g58900 (Arabidopsis thaliana (Mouse-ear cress)).